The chain runs to 195 residues: Imidazoleglycerol-phosphate dehydratase (195 aa).

This sequence belongs to the imidazoleglycerol-phosphate dehydratase family.

Its subcellular location is the cytoplasm. The enzyme catalyses D-erythro-1-(imidazol-4-yl)glycerol 3-phosphate = 3-(imidazol-4-yl)-2-oxopropyl phosphate + H2O. Its pathway is amino-acid biosynthesis; L-histidine biosynthesis; L-histidine from 5-phospho-alpha-D-ribose 1-diphosphate: step 6/9. The polypeptide is Imidazoleglycerol-phosphate dehydratase (Alkaliphilus metalliredigens (strain QYMF)).